Reading from the N-terminus, the 84-residue chain is Large ribosomal subunit protein bL27 (84 aa).

Belongs to the bacterial ribosomal protein bL27 family.

This Karelsulcia muelleri (strain GWSS) (Sulcia muelleri) protein is Large ribosomal subunit protein bL27.